The sequence spans 1168 residues: Transcription-repair-coupling factor (1168 aa).

The 162-residue stretch at 633 to 794 (DMQKSRPMDR…MLGVRDLSVI (162 aa)) folds into the Helicase ATP-binding domain. Residue 646–653 (GDVGYGKT) participates in ATP binding. Residues 747 to 750 (DEEQ) carry the DEEQ box motif. The 162-residue stretch at 808–969 (VLEQNMSFIK…GFKIAMRDLN (162 aa)) folds into the Helicase C-terminal domain.

In the N-terminal section; belongs to the UvrB family. It in the C-terminal section; belongs to the helicase family. RecG subfamily.

The protein localises to the cytoplasm. In terms of biological role, couples transcription and DNA repair by recognizing RNA polymerase (RNAP) stalled at DNA lesions. Mediates ATP-dependent release of RNAP and its truncated transcript from the DNA, and recruitment of nucleotide excision repair machinery to the damaged site. The chain is Transcription-repair-coupling factor from Staphylococcus aureus (strain USA300).